The following is a 365-amino-acid chain: Phospho-N-acetylmuramoyl-pentapeptide-transferase (365 aa).

The next 10 membrane-spanning stretches (helical) occupy residues 22 to 42 (YISV…LALG), 74 to 94 (TMGG…WGDL), 95 to 115 (TSIY…IGFF), 133 to 153 (YKFA…FYLL), 168 to 188 (SLYI…IING), 201 to 221 (GLAI…AYIE), 240 to 260 (LAEV…FLWF), 267 to 287 (VFMG…IAVM), 292 to 312 (LIFF…MLQV), and 342 to 362 (KVVI…LAAI).

Belongs to the glycosyltransferase 4 family. MraY subfamily. Mg(2+) is required as a cofactor.

Its subcellular location is the cell inner membrane. The catalysed reaction is UDP-N-acetyl-alpha-D-muramoyl-L-alanyl-gamma-D-glutamyl-meso-2,6-diaminopimeloyl-D-alanyl-D-alanine + di-trans,octa-cis-undecaprenyl phosphate = di-trans,octa-cis-undecaprenyl diphospho-N-acetyl-alpha-D-muramoyl-L-alanyl-D-glutamyl-meso-2,6-diaminopimeloyl-D-alanyl-D-alanine + UMP. It participates in cell wall biogenesis; peptidoglycan biosynthesis. Its function is as follows. Catalyzes the initial step of the lipid cycle reactions in the biosynthesis of the cell wall peptidoglycan: transfers peptidoglycan precursor phospho-MurNAc-pentapeptide from UDP-MurNAc-pentapeptide onto the lipid carrier undecaprenyl phosphate, yielding undecaprenyl-pyrophosphoryl-MurNAc-pentapeptide, known as lipid I. The sequence is that of Phospho-N-acetylmuramoyl-pentapeptide-transferase from Francisella tularensis subsp. tularensis (strain WY96-3418).